The following is a 152-amino-acid chain: Urease accessory protein UreE (152 aa).

This sequence belongs to the UreE family.

It localises to the cytoplasm. Involved in urease metallocenter assembly. Binds nickel. Probably functions as a nickel donor during metallocenter assembly. The protein is Urease accessory protein UreE of Enterobacter sp. (strain 638).